Here is a 444-residue protein sequence, read N- to C-terminus: Methylenetetrahydrofolate--tRNA-(uracil-5-)-methyltransferase TrmFO (444 aa).

10–15 (GAGLAG) serves as a coordination point for FAD.

This sequence belongs to the MnmG family. TrmFO subfamily. Requires FAD as cofactor.

The protein resides in the cytoplasm. It catalyses the reaction uridine(54) in tRNA + (6R)-5,10-methylene-5,6,7,8-tetrahydrofolate + NADH + H(+) = 5-methyluridine(54) in tRNA + (6S)-5,6,7,8-tetrahydrofolate + NAD(+). The enzyme catalyses uridine(54) in tRNA + (6R)-5,10-methylene-5,6,7,8-tetrahydrofolate + NADPH + H(+) = 5-methyluridine(54) in tRNA + (6S)-5,6,7,8-tetrahydrofolate + NADP(+). Its function is as follows. Catalyzes the folate-dependent formation of 5-methyl-uridine at position 54 (M-5-U54) in all tRNAs. This Streptococcus suis (strain 98HAH33) protein is Methylenetetrahydrofolate--tRNA-(uracil-5-)-methyltransferase TrmFO.